Reading from the N-terminus, the 476-residue chain is tRNA(Ile)-lysidine synthase (476 aa).

ATP is bound at residue 30 to 35 (SGGPDS).

The protein belongs to the tRNA(Ile)-lysidine synthase family.

It is found in the cytoplasm. The enzyme catalyses cytidine(34) in tRNA(Ile2) + L-lysine + ATP = lysidine(34) in tRNA(Ile2) + AMP + diphosphate + H(+). Ligates lysine onto the cytidine present at position 34 of the AUA codon-specific tRNA(Ile) that contains the anticodon CAU, in an ATP-dependent manner. Cytidine is converted to lysidine, thus changing the amino acid specificity of the tRNA from methionine to isoleucine. The sequence is that of tRNA(Ile)-lysidine synthase from Bacillus cereus (strain ATCC 14579 / DSM 31 / CCUG 7414 / JCM 2152 / NBRC 15305 / NCIMB 9373 / NCTC 2599 / NRRL B-3711).